A 611-amino-acid chain; its full sequence is L-tyrosine decarboxylase (611 aa).

Pyridoxal 5'-phosphate contacts are provided by residues 151 to 152 (GS), T292, and 382 to 384 (DPH). Position 385 is an N6-(pyridoxal phosphate)lysine (K385). The Proton donor role is filled by Y413. Pyridoxal 5'-phosphate is bound at residue S433.

Belongs to the group II decarboxylase family. Tyrosine decarboxylase subfamily. Homodimer. Requires pyridoxal 5'-phosphate as cofactor.

The catalysed reaction is L-tyrosine + H(+) = tyramine + CO2. It carries out the reaction L-dopa + H(+) = dopamine + CO2. The protein operates within amino-acid metabolism. Levodopa decarboxylation is not inhibited by carbidopa, benserazide, and methyldopa, that are three human L-dopa decarboxylase inhibitors. Its function is as follows. Catalyzes the decarboxylation of L-tyrosine to produce tyramine. Plays a role in acid resistance since tyramine production via tyrosine decarboxylation appears to provide a cytosolic pH maintenance mechanism that helps the bacterium cope with acid stress such as that encountered in gastrointestinal tract (GIT) environments. Therefore, may contribute to the colonization of the human GIT by E.faecium. Functionally, also involved in drug metabolism, being able to catalyze decarboxylation of levodopa (L-dopa) to dopamine. In gut microbiota this enzyme is in fact exclusively responsible for the decarboxylation of levodopa, and thus reduces in situ levels of levodopa in the treatment of Parkinson's disease. It was shown that abundance of bacterial tyrosine decarboxylase in the proximal small intestine - the primary site of levodopa absorption - contributes to interindividual variation in drug efficacy and can explain the requirement for an increased dosage regimen of levodopa treatment in Parkinson's disease patients. The sequence is that of L-tyrosine decarboxylase from Enterococcus faecium (Streptococcus faecium).